The following is a 124-amino-acid chain: Small ribosomal subunit protein uS12c (124 aa).

Disordered stretches follow at residues 1–28 and 104–124; these read MPTIQQLVRSERRKINKKTKSPALKSCP and AAGVKDRRKSRSKYGTKKPKS. 2 stretches are compositionally biased toward basic residues: residues 11-20 and 109-124; these read ERRKINKKTK and DRRKSRSKYGTKKPKS.

Belongs to the universal ribosomal protein uS12 family. Part of the 30S ribosomal subunit.

It localises to the plastid. The protein localises to the chloroplast. In terms of biological role, with S4 and S5 plays an important role in translational accuracy. Located at the interface of the 30S and 50S subunits. The protein is Small ribosomal subunit protein uS12c (rps12) of Porphyra purpurea (Red seaweed).